The following is a 100-amino-acid chain: Small ribosomal subunit protein bS21 (100 aa).

The span at 37–52 (EKPSEKKAREKAEAVR) shows a compositional bias: basic and acidic residues. The segment at 37-100 (EKPSEKKARE…GAGAGPRGPR (64 aa)) is disordered. Basic residues predominate over residues 53–62 (RARKLARKKL). Residues 84–100 (GAAGAGAGAGAGPRGPR) show a composition bias toward gly residues.

This sequence belongs to the bacterial ribosomal protein bS21 family.

This Rhodopseudomonas palustris (strain BisB5) protein is Small ribosomal subunit protein bS21.